Consider the following 117-residue polypeptide: UPF0102 protein FTN_0424 (117 aa).

Belongs to the UPF0102 family.

The protein is UPF0102 protein FTN_0424 of Francisella tularensis subsp. novicida (strain U112).